The primary structure comprises 487 residues: Kynureninase 1 (487 aa).

Residues Leu147, Thr148, 175-178 (FPSD), Ser232, Asp261, His264, and Tyr286 contribute to the pyridoxal 5'-phosphate site. Lys287 bears the N6-(pyridoxal phosphate)lysine mark. Pyridoxal 5'-phosphate-binding residues include Trp327 and Asn355.

It belongs to the kynureninase family. As to quaternary structure, homodimer. Pyridoxal 5'-phosphate is required as a cofactor.

Its subcellular location is the cytoplasm. It catalyses the reaction L-kynurenine + H2O = anthranilate + L-alanine + H(+). The enzyme catalyses 3-hydroxy-L-kynurenine + H2O = 3-hydroxyanthranilate + L-alanine + H(+). Its pathway is amino-acid degradation; L-kynurenine degradation; L-alanine and anthranilate from L-kynurenine: step 1/1. It participates in cofactor biosynthesis; NAD(+) biosynthesis; quinolinate from L-kynurenine: step 2/3. Catalyzes the cleavage of L-kynurenine (L-Kyn) and L-3-hydroxykynurenine (L-3OHKyn) into anthranilic acid (AA) and 3-hydroxyanthranilic acid (3-OHAA), respectively. The chain is Kynureninase 1 (bna5-1) from Aspergillus oryzae (strain ATCC 42149 / RIB 40) (Yellow koji mold).